The following is a 644-amino-acid chain: Probable potassium transport system protein Kup 2 (644 aa).

The segment at 1 to 21 (MSSDAAAVADRDGSSPGHGGH) is disordered. Transmembrane regions (helical) follow at residues 26–46 (LGAM…TSPL), 69–89 (VLSL…VAII), 120–140 (IILL…ITPA), 155–175 (AGFA…LFMI), 183–203 (VGML…VLGT), 231–251 (LAFL…ALYA), 265–285 (WLVF…AMIL), 312–332 (LVIL…TGAF), 360–380 (IYIP…VMSF), 390–410 (YGIA…VVLI), 419–439 (LAAP…GANL), and 444–464 (DGGW…TTWG).

It belongs to the HAK/KUP transporter (TC 2.A.72) family.

It is found in the cell inner membrane. The catalysed reaction is K(+)(in) + H(+)(in) = K(+)(out) + H(+)(out). Its function is as follows. Transport of potassium into the cell. Likely operates as a K(+):H(+) symporter. The chain is Probable potassium transport system protein Kup 2 from Rhizorhabdus wittichii (strain DSM 6014 / CCUG 31198 / JCM 15750 / NBRC 105917 / EY 4224 / RW1) (Sphingomonas wittichii).